We begin with the raw amino-acid sequence, 320 residues long: Flavonol 4'-sulfotransferase (320 aa).

3'-phosphoadenylyl sulfate is bound at residue 69-74 (KSGTTW). H129 serves as the catalytic Proton acceptor. Residues R151, S159, Y217, and 285–287 (RKA) contribute to the 3'-phosphoadenylyl sulfate site.

Belongs to the sulfotransferase 1 family. As to expression, highest in shoot tips and lowest in mature leaves and roots.

The protein localises to the cytoplasm. It carries out the reaction quercetin 3-sulfate + 3'-phosphoadenylyl sulfate = quercetin 3,4'-bissulfate + adenosine 3',5'-bisphosphate + H(+). With respect to regulation, no requirement for divalent cations and insensitive to p-chloromercuribenzoate, iodoacetate, or iodoacetamide. In terms of biological role, sulfotransferase that utilizes 3'-phospho-5'-adenylyl sulfate (PAPS) as sulfonate donor to catalyze the sulfate conjugation of quercetin 3-sulfate &gt; kaempferol 3-sulfate &gt; isorhamnetin 3-sulfate &gt; patuletin 3-sulfate, but not tamarixetin 3-sulfate. O-sulfation of position 4' of flavonol. May play a role in auxin transport. This Flaveria chlorifolia (Clasping yellowtops) protein is Flavonol 4'-sulfotransferase.